The sequence spans 253 residues: Ubiquinone biosynthesis O-methyltransferase (253 aa).

S-adenosyl-L-methionine is bound by residues R47, G78, D99, and M141.

It belongs to the methyltransferase superfamily. UbiG/COQ3 family.

It carries out the reaction a 3-demethylubiquinol + S-adenosyl-L-methionine = a ubiquinol + S-adenosyl-L-homocysteine + H(+). It catalyses the reaction a 3-(all-trans-polyprenyl)benzene-1,2-diol + S-adenosyl-L-methionine = a 2-methoxy-6-(all-trans-polyprenyl)phenol + S-adenosyl-L-homocysteine + H(+). It participates in cofactor biosynthesis; ubiquinone biosynthesis. Its function is as follows. O-methyltransferase that catalyzes the 2 O-methylation steps in the ubiquinone biosynthetic pathway. The sequence is that of Ubiquinone biosynthesis O-methyltransferase from Rhodopseudomonas palustris (strain BisA53).